The chain runs to 538 residues: MPVSFVHNVLEVVTPYVEYYQENLTKWYILIPTILLTLNFLSILHTKYLEYKFNAKPLTNFAQDYSFGVITPLMLMYFKWHGTVMEFACNVWNNKFLVLNGNVRTVGLRIMGLNIIETTDPENVKAILATQFNDFSLGTRHDFLYSLLGDGIFTLDGAGWKHSRAMLRPQFAREQVAHVKLLEPHVQVLFKHVRKSQGKTFDIQELFFRLTVDSSTEFLFGGSVESLRDASIGMTPSTKNIAGREEFADAFNYSQTYNAYRFLLQQFYWILNGSKFNKSIKTVHKFADFYVQKALSLTEADLEKQEGYVFLYELAKQTRDPKVLRDQLLNILVAGRDTTAGLLSFLFFELSRNPTVFEKLKEEIHNRFGAKEDARVEEITFESLKLCEYLKACVNEALRVYPSVPHNFRVATRNTTLPRGGGKDGMSPIAIKKGQNVMYTILATHRDPNIYGEDANVFRPERWFEPETRKLGWAYVPFNGGPRICLGQQFALTEASYVTVRLLQEFHTLTQDADTRYPPRLQNSLTLSLCDGANIQMY.

The chain crosses the membrane as a helical span at residues 27 to 46; that stretch reads WYILIPTILLTLNFLSILHT. A heme-binding site is contributed by C485.

Belongs to the cytochrome P450 family. Requires heme as cofactor.

The protein localises to the membrane. In terms of biological role, together with an NADPH cytochrome P450 the enzyme system catalyzes the terminal hydroxylation as the first step in the assimilation of alkanes and fatty acids. This is Cytochrome P450 52A4 (CYP52A4) from Candida maltosa (Yeast).